We begin with the raw amino-acid sequence, 367 residues long: CCN family member 4 (367 aa).

Residues 1–22 form the signal peptide; that stretch reads MRWFLPWTLAAVTAAAASTVLA. The IGFBP N-terminal domain occupies 45–118; it reads RPQFCKWPCE…RYAIGVCAQV (74 aa). 4 cysteine pairs are disulfide-bonded: Cys49–Cys73, Cys53–Cys75, Cys55–Cys76, and Cys62–Cys79. Residue Asn86 is glycosylated (N-linked (GlcNAc...) asparagine). Intrachain disulfides connect Cys87-Cys101 and Cys93-Cys115. In terms of domain architecture, VWFC spans 121–186; that stretch reads VGCVLDGVRY…GHCCEQWVCE (66 aa). Residue Asn143 is glycosylated (N-linked (GlcNAc...) asparagine). The region spanning 215 to 260 is the TSP type-1 domain; that stretch reads NCIAYTSPWSPCSTSCGLGVSTRISNVNAQCWPEQESRLCNLRPCD. Disulfide bonds link Cys273–Cys310, Cys290–Cys324, Cys301–Cys340, Cys304–Cys342, and Cys309–Cys346. In terms of domain architecture, CTCK spans 273-347; it reads CLAVYQPEAS…NACFCNLSCR (75 aa). N-linked (GlcNAc...) asparagine glycosylation occurs at Asn284. The N-linked (GlcNAc...) asparagine glycan is linked to Asn343.

This sequence belongs to the CCN family. In terms of tissue distribution, expressed in heart, kidney, lung, pancreas, placenta, ovary, small intestine and spleen. Isoform 2 is expressed predominantly in scirrhous gastric carcinoma and, weakly in placenta. Overexpression is associated with several cancers including breast cancer and colon tumors. Isoform 2 is overexpressed in scirrhous gastric carcinoma.

It localises to the secreted. Downstream regulator in the Wnt/Frizzled-signaling pathway. Associated with cell survival. Attenuates p53-mediated apoptosis in response to DNA damage through activation of AKT kinase. Up-regulates the anti-apoptotic Bcl-X(L) protein. Adheres to skin and melanoma fibroblasts. In vitro binding to skin fibroblasts occurs through the proteoglycans, decorin and biglycan. This Homo sapiens (Human) protein is CCN family member 4.